The following is a 324-amino-acid chain: Beta-ketoacyl-[acyl-carrier-protein] synthase III (324 aa).

Residues C111 and H251 contribute to the active site. The tract at residues 252-256 (QANTR) is ACP-binding. Residue N281 is part of the active site.

The protein belongs to the thiolase-like superfamily. FabH family. Homodimer.

It is found in the plastid. Its subcellular location is the chloroplast. The catalysed reaction is malonyl-[ACP] + acetyl-CoA + H(+) = 3-oxobutanoyl-[ACP] + CO2 + CoA. Its pathway is lipid metabolism; fatty acid biosynthesis. In terms of biological role, catalyzes the condensation reaction of fatty acid synthesis by the addition to an acyl acceptor of two carbons from malonyl-ACP. Catalyzes the first condensation reaction which initiates fatty acid synthesis and may therefore play a role in governing the total rate of fatty acid production. Possesses both acetoacetyl-ACP synthase and acetyl transacylase activities. Its substrate specificity determines the biosynthesis of branched-chain and/or straight-chain of fatty acids. In Pyropia yezoensis (Susabi-nori), this protein is Beta-ketoacyl-[acyl-carrier-protein] synthase III.